The sequence spans 500 residues: Serine/threonine-protein phosphatase 2A 56 kDa regulatory subunit beta isoform (500 aa).

Low complexity predominate over residues 1–19; that stretch reads METKLPPASTPTSPSSPGL. Disordered stretches follow at residues 1–55 and 474–500; these read METK…YQSN and GTQG…GGQS. Phosphoserine; by CLK2 occurs at positions 32, 35, 44, 46, 47, and 48. The span at 34–45 shows a compositional bias: basic residues; it reads RSLRRARPRRSH.

This sequence belongs to the phosphatase 2A regulatory subunit B56 family. As to quaternary structure, component of the serine/threonine-protein phosphatase 2A complex (PP2A). This complex consists of a common heterodimeric core enzyme, composed of a 36 kDa catalytic subunit (subunit C) and a 65 kDa constant scaffold subunit (PR65 or subunit A), that associates with a variety of regulatory subunits. Proteins that associate with the core dimer include three families of regulatory subunits B (the R2/B/PR55/B55, R3/B''/PR72/PR130/PR59 and R5/B'/B56 families), the 48 kDa variable regulatory subunit, viral proteins, and cell signaling molecules. Interacts with SGO1. Interacts with AKT1. As to expression, highly expressed in brain.

The protein resides in the nucleus. Functionally, as the regulatory component of the serine/threonine-protein phosphatase 2A (PP2A) holoenzyme, modulates substrate specificity, subcellular localization, and responsiveness to phosphorylation. The phosphorylated form mediates the interaction between PP2A and AKT1, leading to AKT1 dephosphorylation. The polypeptide is Serine/threonine-protein phosphatase 2A 56 kDa regulatory subunit beta isoform (PPP2R5B) (Oryctolagus cuniculus (Rabbit)).